A 455-amino-acid polypeptide reads, in one-letter code: Phosphoglucosamine mutase (455 aa).

Residue Ser-108 is the Phosphoserine intermediate of the active site. Residues Ser-108, Asp-246, Asp-248, and Asp-250 each contribute to the Mg(2+) site. Ser-108 bears the Phosphoserine mark.

The protein belongs to the phosphohexose mutase family. Requires Mg(2+) as cofactor. Post-translationally, activated by phosphorylation.

The catalysed reaction is alpha-D-glucosamine 1-phosphate = D-glucosamine 6-phosphate. Functionally, catalyzes the conversion of glucosamine-6-phosphate to glucosamine-1-phosphate. This Frankia casuarinae (strain DSM 45818 / CECT 9043 / HFP020203 / CcI3) protein is Phosphoglucosamine mutase.